A 131-amino-acid chain; its full sequence is MATVPTRSGSPRQLTTKQTGDAWEVQARRWLEGKGLRFVAANVNERGGEIDLIMREGRTTVFVEVRYRRSALYGGAAASVTRSKQHKLLQTARLWLARHNGSFDTVDCRFDVVAFTGNEVEWIKDAFNDHS.

Residues 1–19 (MATVPTRSGSPRQLTTKQT) are compositionally biased toward polar residues. The segment at 1 to 20 (MATVPTRSGSPRQLTTKQTG) is disordered.

The protein belongs to the UPF0102 family.

This chain is UPF0102 protein YraN, found in Escherichia coli (strain 55989 / EAEC).